We begin with the raw amino-acid sequence, 182 residues long: Protein GrpE (182 aa).

This sequence belongs to the GrpE family. In terms of assembly, homodimer.

The protein resides in the cytoplasm. Functionally, participates actively in the response to hyperosmotic and heat shock by preventing the aggregation of stress-denatured proteins, in association with DnaK and GrpE. It is the nucleotide exchange factor for DnaK and may function as a thermosensor. Unfolded proteins bind initially to DnaJ; upon interaction with the DnaJ-bound protein, DnaK hydrolyzes its bound ATP, resulting in the formation of a stable complex. GrpE releases ADP from DnaK; ATP binding to DnaK triggers the release of the substrate protein, thus completing the reaction cycle. Several rounds of ATP-dependent interactions between DnaJ, DnaK and GrpE are required for fully efficient folding. In Aquifex aeolicus (strain VF5), this protein is Protein GrpE.